Here is a 306-residue protein sequence, read N- to C-terminus: UDP-3-O-acyl-N-acetylglucosamine deacetylase (306 aa).

Zn(2+) contacts are provided by H79, H238, and D242. H265 serves as the catalytic Proton donor.

The protein belongs to the LpxC family. Requires Zn(2+) as cofactor.

The enzyme catalyses a UDP-3-O-[(3R)-3-hydroxyacyl]-N-acetyl-alpha-D-glucosamine + H2O = a UDP-3-O-[(3R)-3-hydroxyacyl]-alpha-D-glucosamine + acetate. The protein operates within glycolipid biosynthesis; lipid IV(A) biosynthesis; lipid IV(A) from (3R)-3-hydroxytetradecanoyl-[acyl-carrier-protein] and UDP-N-acetyl-alpha-D-glucosamine: step 2/6. In terms of biological role, catalyzes the hydrolysis of UDP-3-O-myristoyl-N-acetylglucosamine to form UDP-3-O-myristoylglucosamine and acetate, the committed step in lipid A biosynthesis. In Shewanella piezotolerans (strain WP3 / JCM 13877), this protein is UDP-3-O-acyl-N-acetylglucosamine deacetylase.